A 348-amino-acid chain; its full sequence is tRNA N6-adenosine threonylcarbamoyltransferase (348 aa).

Fe cation contacts are provided by histidine 116 and histidine 120. Substrate-binding positions include 138 to 142, aspartate 171, glycine 184, and asparagine 282; that span reads IISGG. Residue aspartate 310 coordinates Fe cation.

This sequence belongs to the KAE1 / TsaD family. It depends on Fe(2+) as a cofactor.

It is found in the cytoplasm. The catalysed reaction is L-threonylcarbamoyladenylate + adenosine(37) in tRNA = N(6)-L-threonylcarbamoyladenosine(37) in tRNA + AMP + H(+). In terms of biological role, required for the formation of a threonylcarbamoyl group on adenosine at position 37 (t(6)A37) in tRNAs that read codons beginning with adenine. Is involved in the transfer of the threonylcarbamoyl moiety of threonylcarbamoyl-AMP (TC-AMP) to the N6 group of A37, together with TsaE and TsaB. TsaD likely plays a direct catalytic role in this reaction. This chain is tRNA N6-adenosine threonylcarbamoyltransferase, found in Ehrlichia ruminantium (strain Gardel).